An 82-amino-acid chain; its full sequence is Small ribosomal subunit protein uS17 (82 aa).

Belongs to the universal ribosomal protein uS17 family. Part of the 30S ribosomal subunit.

Functionally, one of the primary rRNA binding proteins, it binds specifically to the 5'-end of 16S ribosomal RNA. In Ehrlichia ruminantium (strain Gardel), this protein is Small ribosomal subunit protein uS17.